The primary structure comprises 380 residues: Probable acyl-CoA dehydrogenase YngJ (380 aa).

Residues 123–132 (FGLTEPNAGS), 156–158 (WIT), Arg-269, and 337–341 (QIHGG) each bind FAD. The Proton acceptor role is filled by Glu-364. 366-368 (TSE) is an FAD binding site.

The protein belongs to the acyl-CoA dehydrogenase family. FAD is required as a cofactor.

The enzyme catalyses a 2,3-saturated acyl-CoA + A = a 2,3-dehydroacyl-CoA + AH2. This Bacillus subtilis (strain 168) protein is Probable acyl-CoA dehydrogenase YngJ (yngJ).